The primary structure comprises 70 residues: Turripeptide Ici9.2 (70 aa).

The N-terminal stretch at 1 to 20 (MKVYCLLLVLLVGLVSQAQG) is a signal peptide. Residues 21-70 (QLDKKCQTMCTMEYLPVCGSDGTTYPNKCTLTSTACVNQMDITVLHNGEC) enclose the Kazal-like domain. Intrachain disulfides connect Cys-26–Cys-56, Cys-30–Cys-49, and Cys-38–Cys-70.

It belongs to the conopeptide P-like superfamily. Expressed by the venom duct.

Its subcellular location is the secreted. Functionally, acts as a neurotoxin by inhibiting an ion channel. May also act as a serine protease inhibitor, since it possess the kazal serine protease inhibitor signature. The chain is Turripeptide Ici9.2 from Iotyrris cingulifera (Sea snail).